Reading from the N-terminus, the 167-residue chain is uncharacterized protein (167 aa).

This is an uncharacterized protein from Acidianus convivator (ATV).